The chain runs to 520 residues: UvrABC system protein C (520 aa).

The 79-residue stretch at 11–89 (EEPGCYQFKD…IKKYQPKYNI (79 aa)) folds into the GIY-YIG domain. Residues 195–230 (QDLIYDLRKEMETFAAAEEYEKALVIRDRIAAIENL) form the UVR domain.

Belongs to the UvrC family. In terms of assembly, interacts with UvrB in an incision complex.

Its subcellular location is the cytoplasm. Its function is as follows. The UvrABC repair system catalyzes the recognition and processing of DNA lesions. UvrC both incises the 5' and 3' sides of the lesion. The N-terminal half is responsible for the 3' incision and the C-terminal half is responsible for the 5' incision. This chain is UvrABC system protein C, found in Methanospirillum hungatei JF-1 (strain ATCC 27890 / DSM 864 / NBRC 100397 / JF-1).